The chain runs to 414 residues: Histidine--tRNA ligase (414 aa).

It belongs to the class-II aminoacyl-tRNA synthetase family. In terms of assembly, homodimer.

The protein resides in the cytoplasm. The catalysed reaction is tRNA(His) + L-histidine + ATP = L-histidyl-tRNA(His) + AMP + diphosphate + H(+). This Ehrlichia ruminantium (strain Gardel) protein is Histidine--tRNA ligase.